A 346-amino-acid chain; its full sequence is Probable alpha-1,2-galactosyltransferase gmh2 (346 aa).

Residues 1–11 lie on the Cytoplasmic side of the membrane; the sequence is MALMLSRIPRR. Residues 12–32 form a helical; Signal-anchor for type II membrane protein membrane-spanning segment; that stretch reads FFFLFLTVGLIAGAFLYSLIY. Over 33 to 346 the chain is Lumenal; that stretch reads FVDVDLVSKV…LWQKFYALID (314 aa). N-linked (GlcNAc...) asparagine glycosylation is found at N64, N142, and N224.

Belongs to the glycosyltransferase 34 family.

It localises to the golgi apparatus membrane. In Schizosaccharomyces pombe (strain 972 / ATCC 24843) (Fission yeast), this protein is Probable alpha-1,2-galactosyltransferase gmh2 (gmh2).